Consider the following 173-residue polypeptide: Crossover junction endodeoxyribonuclease RuvC (173 aa).

Catalysis depends on residues Asp-8, Glu-67, and Asp-139. Asp-8, Glu-67, and Asp-139 together coordinate Mg(2+).

The protein belongs to the RuvC family. As to quaternary structure, homodimer which binds Holliday junction (HJ) DNA. The HJ becomes 2-fold symmetrical on binding to RuvC with unstacked arms; it has a different conformation from HJ DNA in complex with RuvA. In the full resolvosome a probable DNA-RuvA(4)-RuvB(12)-RuvC(2) complex forms which resolves the HJ. The cofactor is Mg(2+).

It is found in the cytoplasm. It catalyses the reaction Endonucleolytic cleavage at a junction such as a reciprocal single-stranded crossover between two homologous DNA duplexes (Holliday junction).. The RuvA-RuvB-RuvC complex processes Holliday junction (HJ) DNA during genetic recombination and DNA repair. Endonuclease that resolves HJ intermediates. Cleaves cruciform DNA by making single-stranded nicks across the HJ at symmetrical positions within the homologous arms, yielding a 5'-phosphate and a 3'-hydroxyl group; requires a central core of homology in the junction. The consensus cleavage sequence is 5'-(A/T)TT(C/G)-3'. Cleavage occurs on the 3'-side of the TT dinucleotide at the point of strand exchange. HJ branch migration catalyzed by RuvA-RuvB allows RuvC to scan DNA until it finds its consensus sequence, where it cleaves and resolves the cruciform DNA. This Salmonella choleraesuis (strain SC-B67) protein is Crossover junction endodeoxyribonuclease RuvC.